We begin with the raw amino-acid sequence, 64 residues long: Alpha-like toxin Lqh6 (64 aa).

The LCN-type CS-alpha/beta domain occupies Arg2–His63. 4 cysteine pairs are disulfide-bonded: Cys12–Cys62, Cys16–Cys34, Cys20–Cys44, and Cys24–Cys46. Lys64 is modified (lysine amide).

It belongs to the long (4 C-C) scorpion toxin superfamily. Sodium channel inhibitor family. Alpha subfamily. As to expression, expressed by the venom gland.

The protein localises to the secreted. Its function is as follows. Alpha toxins bind voltage-independently at site-3 of sodium channels (Nav) and inhibit the inactivation of the activated channels, thereby blocking neuronal transmission. This toxin is highly toxic to insects and mice, and inhibits the binding of alpha-toxin to cockroach neuronal membranes. The sequence is that of Alpha-like toxin Lqh6 from Leiurus hebraeus (Hebrew deathstalker scorpion).